Here is an 890-residue protein sequence, read N- to C-terminus: Tyrosine-protein kinase receptor TYRO3 (890 aa).

A signal peptide spans 1–40 (MALRRSMGRPGLPPLPLPPPPRLGLLLAALASLLLPESAA). Ig-like C2-type domains are found at residues 41–128 (AGLK…TEIS) and 139–220 (PFFT…ATVH). Topologically, residues 41 to 429 (AGLKLMGAPV…QGPPHSRTSW (389 aa)) are extracellular. N-linked (GlcNAc...) asparagine glycosylation occurs at asparagine 63. Cystine bridges form between cysteine 64-cysteine 117 and cysteine 160-cysteine 203. N-linked (GlcNAc...) asparagine glycans are attached at residues asparagine 191, asparagine 230, asparagine 240, asparagine 293, asparagine 366, and asparagine 380. 2 consecutive Fibronectin type-III domains span residues 227-320 (APFN…TKGL) and 325-416 (APQN…SHDR). A helical transmembrane segment spans residues 430-450 (VPVVLGVLTALVTAAALALIL). Over 451-890 (LRKRRKETRF…QQGLLPHSSC (440 aa)) the chain is Cytoplasmic. Serine 466 carries the phosphoserine modification. Residues 518 to 790 (FTLGRMLGKG…CLRMELENIL (273 aa)) enclose the Protein kinase domain. Residues 524–532 (LGKGEFGSV) and lysine 550 contribute to the ATP site. Residue aspartate 655 is the Proton acceptor of the active site. Residues tyrosine 681, tyrosine 685, tyrosine 686, and tyrosine 804 each carry the phosphotyrosine; by autocatalysis modification. Disordered regions lie at residues 815–837 (AGGS…GSGM) and 851–871 (LTPG…ESPL). A phosphoserine mark is found at serine 818 and serine 869.

It belongs to the protein kinase superfamily. Tyr protein kinase family. AXL/UFO subfamily. In terms of assembly, monomer and homodimer. Interacts (via N-terminus) with extracellular ligands TULP1 and GAS6. Interacts with PIK3R1; this interaction increases PI3-kinase activity. In terms of processing, autophosphorylated. In terms of tissue distribution, abundant in the brain and lower levels in other tissues.

The protein resides in the cell membrane. The enzyme catalyses L-tyrosyl-[protein] + ATP = O-phospho-L-tyrosyl-[protein] + ADP + H(+). Functionally, receptor tyrosine kinase that transduces signals from the extracellular matrix into the cytoplasm by binding to several ligands including TULP1 or GAS6. Regulates many physiological processes including cell survival, migration and differentiation. Ligand binding at the cell surface induces dimerization and autophosphorylation of TYRO3 on its intracellular domain that provides docking sites for downstream signaling molecules. Following activation by ligand, interacts with PIK3R1 and thereby enhances PI3-kinase activity. Activates the AKT survival pathway, including nuclear translocation of NF-kappa-B and up-regulation of transcription of NF-kappa-B-regulated genes. TYRO3 signaling plays a role in various processes such as neuron protection from excitotoxic injury, platelet aggregation and cytoskeleton reorganization. Also plays an important role in inhibition of Toll-like receptors (TLRs)-mediated innate immune response by activating STAT1, which selectively induces production of suppressors of cytokine signaling SOCS1 and SOCS3. (Microbial infection) Acts as a receptor for lassa virus and lymphocytic choriomeningitis virus, possibly through GAS6 binding to phosphatidyl-serine at the surface of virion envelope. Its function is as follows. (Microbial infection) Acts as a receptor for Ebolavirus, possibly through GAS6 binding to phosphatidyl-serine at the surface of virion envelope. This is Tyrosine-protein kinase receptor TYRO3 (TYRO3) from Homo sapiens (Human).